Reading from the N-terminus, the 505-residue chain is Betaine aldehyde dehydrogenase 1 (505 aa).

A betaine aldehyde-binding site is contributed by 163-172 (WNYPLLMATW). 240 to 245 (GSTETG) provides a ligand contact to NAD(+). Betaine aldehyde contacts are provided by residues Glu262, 294–297 (QVCS), and Cys455. Active-site residues include Glu262 and Cys296. 4-aminobutanal contacts are provided by residues 262–263 (EL) and Cys296. Trp461 serves as a coordination point for 4-aminobutanal. Residues 503–505 (SKL) carry the Microbody targeting signal motif.

The protein belongs to the aldehyde dehydrogenase family. As to quaternary structure, homodimer.

The protein localises to the peroxisome. The enzyme catalyses betaine aldehyde + NAD(+) + H2O = glycine betaine + NADH + 2 H(+). Its pathway is amine and polyamine biosynthesis; betaine biosynthesis via choline pathway; betaine from betaine aldehyde: step 1/1. Its function is as follows. Dehydrogenase that can use N-acetyl-gamma-aminobutyraldehyde (NAGABald), gamma-guanidinobutyraldehyde (GGBald), betaine aldehyde (Bet-ald), gamma-aminobutyraldehyde (GAB-ald), acetaldehyde, 4-aminobutylaldehyde (AB-ald), 3-aminopropionaldehyde (AP-ald), 4-N-trimethylaminobutyraldehyde (TMAB-ald) and 3-N-trimethylaminopropionaldehyde (TMAP-ald) as substrates. Catalyzes the oxidation of GAB-ald more efficiently than Bet-ald. May convert acetaldehyde into acetate, thus facilitating the production of acetyl-CoA in peroxisomes under anaerobic conditions. This chain is Betaine aldehyde dehydrogenase 1 (BADH1), found in Oryza sativa subsp. japonica (Rice).